The chain runs to 191 residues: uncharacterized protein (191 aa).

This is an uncharacterized protein from Methanocaldococcus jannaschii (strain ATCC 43067 / DSM 2661 / JAL-1 / JCM 10045 / NBRC 100440) (Methanococcus jannaschii).